The chain runs to 291 residues: Elongation factor Ts (291 aa).

The interval 79–82 is involved in Mg(2+) ion dislocation from EF-Tu; that stretch reads TDFV.

Belongs to the EF-Ts family.

The protein resides in the cytoplasm. Functionally, associates with the EF-Tu.GDP complex and induces the exchange of GDP to GTP. It remains bound to the aminoacyl-tRNA.EF-Tu.GTP complex up to the GTP hydrolysis stage on the ribosome. The protein is Elongation factor Ts of Anaplasma marginale (strain St. Maries).